The sequence spans 312 residues: uncharacterized protein (312 aa).

Residues 1–14 (MSIVETCISFVSTN) lie on the Extracellular side of the membrane. A helical transmembrane segment spans residues 15–35 (PFYPFCTGLLLNCVVTPLYFW). Over 36 to 41 (KTQNGR) the chain is Cytoplasmic. Residues 42 to 62 (IVVVSLLQFVVLYATAFISIG) traverse the membrane as a helical segment. Residues 63–179 (TDKSLYRNKW…LEYDQDTATE (117 aa)) lie on the Extracellular side of the membrane. The FAD-binding FR-type domain occupies 70 to 173 (NKWVALPLSK…KGPLGELEYD (104 aa)). The chain crosses the membrane as a helical span at residues 180–200 (LGIIAGGSGITPVLQVLQEII). Over 201-312 (PSPEDLTHIS…GNGTDKVFVF (112 aa)) the chain is Cytoplasmic.

It belongs to the flavoprotein pyridine nucleotide cytochrome reductase family. Requires FAD as cofactor.

It localises to the membrane. This is an uncharacterized protein from Saccharomyces cerevisiae (strain ATCC 204508 / S288c) (Baker's yeast).